Here is an 828-residue protein sequence, read N- to C-terminus: Auxin response factor 2B (828 aa).

Positions 128–230 form a DNA-binding region, TF-B3; it reads FCKTLTASDT…ELRVGVRRAM (103 aa). 3 disordered regions span residues 348 to 397, 681 to 703, and 791 to 828; these read PDRV…GSSK, EQFQ…HSTR, and NPGT…PEDS. Over residues 360–370 the composition is skewed to pro residues; it reads LSPPALNPLPI. The segment covering 380–390 has biased composition (polar residues); sequence VLPSSPDSSVL. Positions 703–786 constitute a PB1 domain; that stretch reads RSCTKVHKQG…RKIFIYTKDE (84 aa). Residues 791 to 806 are compositionally biased toward polar residues; sequence NPGTLNSKGEDNSSVA.

It belongs to the ARF family. In terms of assembly, homodimers and heterodimers. As to expression, expressed in root, leaf and stem. Also expressed in flower and fruit. Expressed in flower buds about three days before opening including stamen, petal and sepal with the highest in ovary.

The protein resides in the nucleus. Its function is as follows. Auxin response factors (ARFs) are transcriptional factors that binds specifically to the DNA sequence 5'-TGTCTC-3' found in the auxin-responsive promoter elements (AuxREs). Could act as transcriptional activator or repressor. Involved in the control of fruit ripening process. Regulates expression of a number of ripening regulators, transcription factors, and ethylene biosynthesis and signaling components. May act as a transcriptional repressor of auxin-responsive genes. The protein is Auxin response factor 2B of Solanum lycopersicum (Tomato).